Consider the following 290-residue polypeptide: Arylamine N-acetyltransferase 1 (290 aa).

M1 bears the N-acetylmethionine mark. Residue C68 is the Acyl-thioester intermediate of the active site. S103 provides a ligand contact to CoA. Substrate is bound at residue 106–107 (IH). Active-site residues include H107 and D122. CoA contacts are provided by Y208 and S287.

Belongs to the arylamine N-acetyltransferase family.

It is found in the cytoplasm. The catalysed reaction is an arylamine + acetyl-CoA = an N-acetylarylamine + CoA. Participates in the detoxification of a plethora of hydrazine and arylamine drugs. In Mesocricetus auratus (Golden hamster), this protein is Arylamine N-acetyltransferase 1 (NAT1).